Consider the following 228-residue polypeptide: L-ribulose-5-phosphate 4-epimerase UlaF (228 aa).

Substrate contacts are provided by residues 26–27 (GN), 43–44 (SG), and 72–73 (SS). Positions 74, 93, and 95 each coordinate Zn(2+). D118 serves as the catalytic Proton donor/acceptor. Zn(2+) is bound at residue H167. The active-site Proton donor/acceptor is Y225.

This sequence belongs to the aldolase class II family. AraD/FucA subfamily. Zn(2+) is required as a cofactor.

The catalysed reaction is L-ribulose 5-phosphate = D-xylulose 5-phosphate. The protein operates within cofactor degradation; L-ascorbate degradation; D-xylulose 5-phosphate from L-ascorbate: step 4/4. Catalyzes the isomerization of L-ribulose 5-phosphate to D-xylulose 5-phosphate. Is involved in the anaerobic L-ascorbate utilization. The protein is L-ribulose-5-phosphate 4-epimerase UlaF of Salmonella paratyphi A (strain ATCC 9150 / SARB42).